Reading from the N-terminus, the 630-residue chain is tRNA uridine 5-carboxymethylaminomethyl modification enzyme MnmG (630 aa).

FAD is bound at residue 13–18; it reads GGGHAG. An NAD(+)-binding site is contributed by 273–287; it reads GPRYCPSIEDKIHRF.

It belongs to the MnmG family. In terms of assembly, homodimer. Heterotetramer of two MnmE and two MnmG subunits. FAD is required as a cofactor.

The protein localises to the cytoplasm. In terms of biological role, NAD-binding protein involved in the addition of a carboxymethylaminomethyl (cmnm) group at the wobble position (U34) of certain tRNAs, forming tRNA-cmnm(5)s(2)U34. This chain is tRNA uridine 5-carboxymethylaminomethyl modification enzyme MnmG, found in Pseudomonas putida (strain W619).